The sequence spans 215 residues: Large ribosomal subunit protein uL3c (215 aa).

Residues 132 to 151 form a disordered region; that stretch reads RGAMSHGSKSHRRPGSIGAG.

Belongs to the universal ribosomal protein uL3 family. In terms of assembly, part of the 50S ribosomal subunit.

It localises to the plastid. Its subcellular location is the chloroplast. In terms of biological role, one of the primary rRNA binding proteins, it binds directly near the 3'-end of the 23S rRNA, where it nucleates assembly of the 50S subunit. In Cyanidium caldarium (Red alga), this protein is Large ribosomal subunit protein uL3c (rpl3).